A 139-amino-acid polypeptide reads, in one-letter code: MTARIDDTAAEENPRAVARARFVRVTPMKARRVVELIKGRSASEALAVLQFAPQAASGPVSKVLASAVANAENNLSLDPDTLWVHRAYVDEGPTLKRFRPRAQGRAYRIRKRTSHITVEVESRPKKVASKSKSQKGSAR.

The disordered stretch occupies residues 118-139 (VEVESRPKKVASKSKSQKGSAR). The span at 125 to 139 (KKVASKSKSQKGSAR) shows a compositional bias: basic residues.

This sequence belongs to the universal ribosomal protein uL22 family. Part of the 50S ribosomal subunit.

In terms of biological role, this protein binds specifically to 23S rRNA; its binding is stimulated by other ribosomal proteins, e.g. L4, L17, and L20. It is important during the early stages of 50S assembly. It makes multiple contacts with different domains of the 23S rRNA in the assembled 50S subunit and ribosome. Its function is as follows. The globular domain of the protein is located near the polypeptide exit tunnel on the outside of the subunit, while an extended beta-hairpin is found that lines the wall of the exit tunnel in the center of the 70S ribosome. This chain is Large ribosomal subunit protein uL22, found in Saccharopolyspora erythraea (strain ATCC 11635 / DSM 40517 / JCM 4748 / NBRC 13426 / NCIMB 8594 / NRRL 2338).